Here is an 884-residue protein sequence, read N- to C-terminus: Protein translocase subunit SecA (884 aa).

ATP-binding positions include Q88, 106–110 (GEGKT), and D509. Residues 822-884 (EQKKLKMSGA…PKKGLFANND (63 aa)) are disordered. A compositionally biased stretch (basic and acidic residues) spans 833-842 (KGGEDLEETK). Positions 858, 860, 869, and 870 each coordinate Zn(2+).

The protein belongs to the SecA family. As to quaternary structure, monomer and homodimer. Part of the essential Sec protein translocation apparatus which comprises SecA, SecYEG and auxiliary proteins SecDF-YajC and YidC. The cofactor is Zn(2+).

The protein resides in the cell inner membrane. Its subcellular location is the cytoplasm. It carries out the reaction ATP + H2O + cellular proteinSide 1 = ADP + phosphate + cellular proteinSide 2.. Part of the Sec protein translocase complex. Interacts with the SecYEG preprotein conducting channel. Has a central role in coupling the hydrolysis of ATP to the transfer of proteins into and across the cell membrane, serving as an ATP-driven molecular motor driving the stepwise translocation of polypeptide chains across the membrane. The polypeptide is Protein translocase subunit SecA (Campylobacter hominis (strain ATCC BAA-381 / DSM 21671 / CCUG 45161 / LMG 19568 / NCTC 13146 / CH001A)).